The sequence spans 321 residues: Glucokinase (321 aa).

8 to 13 contacts ATP; that stretch reads GDVGGT.

It belongs to the bacterial glucokinase family.

It localises to the cytoplasm. The catalysed reaction is D-glucose + ATP = D-glucose 6-phosphate + ADP + H(+). The polypeptide is Glucokinase (Salmonella heidelberg (strain SL476)).